The primary structure comprises 123 residues: uncharacterized protein (123 aa).

Residues 1–20 form the signal peptide; the sequence is MSPLIVGTLIIILLSGLATA. G96 carries the GPI-anchor amidated glycine lipid modification. The propeptide at 97 to 123 is removed in mature form; it reads SSPTTKRVIYIVMILLVLITLAVNLKH.

It is found in the cell membrane. This is an uncharacterized protein from Schizosaccharomyces pombe (strain 972 / ATCC 24843) (Fission yeast).